Consider the following 414-residue polypeptide: Histidine--tRNA ligase (414 aa).

It belongs to the class-II aminoacyl-tRNA synthetase family. In terms of assembly, homodimer.

Its subcellular location is the cytoplasm. It carries out the reaction tRNA(His) + L-histidine + ATP = L-histidyl-tRNA(His) + AMP + diphosphate + H(+). The polypeptide is Histidine--tRNA ligase (Rickettsia africae (strain ESF-5)).